The chain runs to 31 residues: Chymotrypsin (31 aa).

In terms of domain architecture, Peptidase S1 spans 1–31 (IVGGVEAVPGVWPYQAALFIIDMYFCGGSLI).

It belongs to the peptidase S1 family.

It is found in the secreted. The protein resides in the extracellular space. It carries out the reaction Preferential cleavage: Tyr-|-Xaa, Trp-|-Xaa, Phe-|-Xaa, Leu-|-Xaa.. The sequence is that of Chymotrypsin from Penaeus monodon (Giant tiger prawn).